Here is a 992-residue protein sequence, read N- to C-terminus: Vacuolar membrane protease (992 aa).

The Cytoplasmic portion of the chain corresponds to 1 to 24 (MSPAMANPRVRKFNPIAFTPLPVT). Residues 25–45 (FITTIVYLAVLILVLVTYLVV) traverse the membrane as a helical segment. Residues 46–390 (PPAPTLEMSP…SAFAVFRLHT (345 aa)) are Vacuolar-facing. 3 N-linked (GlcNAc...) asparagine glycosylation sites follow: asparagine 59, asparagine 115, and asparagine 118. Zn(2+)-binding residues include histidine 174 and aspartate 186. Glutamate 220 (proton acceptor) is an active-site residue. Glutamate 221 lines the Zn(2+) pocket. Residue asparagine 237 is glycosylated (N-linked (GlcNAc...) asparagine). 2 residues coordinate Zn(2+): glutamate 246 and histidine 319. Residues 391 to 411 (LFALSVTLLVIGPLVLFITSI) form a helical membrane-spanning segment. The Cytoplasmic portion of the chain corresponds to 412-446 (ALSKTDRMYLFSMSKSLGGASETVSLRGLRGLFRT). A helical transmembrane segment spans residues 447–467 (PIILTVTTVIPIGLAYLLEKI). At 468–474 (NPYIVHS) the chain is on the vacuolar side. Residues 475–495 (SQFAVWSMMLSVWIFVAWFLA) form a helical membrane-spanning segment. The Cytoplasmic segment spans residues 496–508 (RVADFFRPSALHR). The helical transmembrane segment at 509-529 (AYSYTWIFIVTWIMLVISTVY) threads the bilayer. Over 530-533 (ANQK) the chain is Vacuolar. Residues 534-554 (GIAAGYFTFFYFAAVFLATWV) form a helical membrane-spanning segment. Residues 555–671 (SYLELFSLPR…WSWTLPRWTW (117 aa)) are Cytoplasmic-facing. The interval 579–620 (RSSSLSSRLLTPSADELPSDIGPNGAENVGDPDETDPTESTS) is disordered. A helical membrane pass occupies residues 672–692 (ILQLLLLAPIVIILVGQVGLL). The Vacuolar segment spans residues 693 to 708 (LTTAMSQIGSDGVSTF). Residues 709-729 (IVYLACALFSTLLFAPLLPFI) traverse the membrane as a helical segment. Residues 730–736 (HRFTYHV) are Cytoplasmic-facing. A helical membrane pass occupies residues 737–757 (PTFLLLIFIGTLIYNLVAFPF). Residues 758-992 (SPANRLKIFF…VEASHDFIIQ (235 aa)) are Vacuolar-facing. N-linked (GlcNAc...) asparagine glycosylation is found at asparagine 805, asparagine 846, and asparagine 954.

It belongs to the peptidase M28 family. The cofactor is Zn(2+).

Its subcellular location is the vacuole membrane. May be involved in vacuolar sorting and osmoregulation. This chain is Vacuolar membrane protease, found in Paracoccidioides brasiliensis (strain Pb03).